The primary structure comprises 93 residues: Small ribosomal subunit protein uS19 (93 aa).

This sequence belongs to the universal ribosomal protein uS19 family.

Protein S19 forms a complex with S13 that binds strongly to the 16S ribosomal RNA. This Streptococcus gordonii (strain Challis / ATCC 35105 / BCRC 15272 / CH1 / DL1 / V288) protein is Small ribosomal subunit protein uS19.